The sequence spans 509 residues: Maturase K (509 aa).

It belongs to the intron maturase 2 family. MatK subfamily.

The protein localises to the plastid. It is found in the chloroplast. Its function is as follows. Usually encoded in the trnK tRNA gene intron. Probably assists in splicing its own and other chloroplast group II introns. The chain is Maturase K from Thujopsis dolabrata (Hiba arborvitae).